The primary structure comprises 245 residues: rRNA adenine N-6-methyltransferase (245 aa).

S-adenosyl-L-methionine-binding residues include N10, L12, G37, E58, D83, and S100.

Belongs to the class I-like SAM-binding methyltransferase superfamily. rRNA adenine N(6)-methyltransferase family.

The enzyme catalyses adenosine(2085) in 23S rRNA + 2 S-adenosyl-L-methionine = N(6)-dimethyladenosine(2085) in 23S rRNA + 2 S-adenosyl-L-homocysteine + 2 H(+). This protein produces a dimethylation of the adenine residue at position 2085 in 23S rRNA, resulting in reduced affinity between ribosomes and macrolide-lincosamide-streptogramin B antibiotics. This chain is rRNA adenine N-6-methyltransferase (ermBP), found in Clostridium perfringens.